Reading from the N-terminus, the 194-residue chain is Small ribosomal subunit protein eS7 (194 aa).

The protein belongs to the eukaryotic ribosomal protein eS7 family.

The polypeptide is Small ribosomal subunit protein eS7 (RpS7) (Drosophila yakuba (Fruit fly)).